Consider the following 256-residue polypeptide: Pimeloyl-[acyl-carrier protein] methyl ester esterase (256 aa).

The AB hydrolase-1 domain occupies 15 to 242 (HLVLLHGWGL…AAHAPFISHP (228 aa)). Substrate-binding positions include Trp22, 82–83 (SL), and 143–147 (FLALQ). The Nucleophile role is filled by Ser82. Residues Asp207 and His235 contribute to the active site. His235 provides a ligand contact to substrate.

This sequence belongs to the AB hydrolase superfamily. Carboxylesterase BioH family. In terms of assembly, monomer.

It is found in the cytoplasm. The enzyme catalyses 6-carboxyhexanoyl-[ACP] methyl ester + H2O = 6-carboxyhexanoyl-[ACP] + methanol + H(+). It functions in the pathway cofactor biosynthesis; biotin biosynthesis. Its function is as follows. The physiological role of BioH is to remove the methyl group introduced by BioC when the pimeloyl moiety is complete. It allows to synthesize pimeloyl-ACP via the fatty acid synthetic pathway through the hydrolysis of the ester bonds of pimeloyl-ACP esters. This chain is Pimeloyl-[acyl-carrier protein] methyl ester esterase, found in Escherichia coli O157:H7.